The following is a 233-amino-acid chain: Ion-translocating oxidoreductase complex subunit E (233 aa).

A run of 6 helical transmembrane segments spans residues 18 to 38, 39 to 59, 69 to 89, 92 to 112, 128 to 148, and 182 to 202; these read ALVQ…ATNA, LGLG…VSAL, IPIY…LINA, FGLY…CIVI, ALDG…LGAL, and PFLL…LLAG.

It belongs to the NqrDE/RnfAE family. In terms of assembly, the complex is composed of six subunits: RnfA, RnfB, RnfC, RnfD, RnfE and RnfG.

The protein localises to the cell inner membrane. In terms of biological role, part of a membrane-bound complex that couples electron transfer with translocation of ions across the membrane. The chain is Ion-translocating oxidoreductase complex subunit E from Yersinia pseudotuberculosis serotype O:3 (strain YPIII).